A 634-amino-acid polypeptide reads, in one-letter code: MTNSNLRTENHFDYVKISIASPQRIMDWGQRTLPNGQVVGEVTKPETINYRTLKPEMDGLFCEKIFGPSKDWECHCGKYKRVRHRGIVCERCGVEVTESRVRRHRMGYIKLAAPVSHVWYLKGIPSYVAILLDIPLRDVEQIVYFNCYVVLDVGDHKDLKYKQLLTEDEWLEIEDEIYAEDSTIENEPFVGIGAEALKQLLEDLDLNQIAEELREEITNSKGQKRAKLIKRIRVIDNFIATNAKPEWMVLDAIPVIPPDLRPMVQLDGGRFATSDLNDLYRRVINRNNRLARLQEILAPEIIVRNEKRMLQEAVDALIDNGRRGRTVVGANNRALKSLSDIIEGKQGRFRQNLLGKRVDYSGRSVIVVGPKLKMHQCGLPKEMAIELFQPFVIHRLIRQNIVNNIKAAKKLIQKADDEVMQVLQEVIEGHPILLNRAPTLHRLGIQAFEPKLVGGRAIQLHPLVCPAFNADFDGDQMAVHVPLALEAQTEARMLMLASNNILSPATGEPIVTPSQDMVLGSYYLTALQPNFKKPNFGDNQRTYASLEDVIFAFEDKRVGLHEWVWLRFNGEVDDDEESKTPQETKELEDGSKLEIWNFRRDRFDSQNNLISRFILTTVGRVVMNHTIIDSVSKT.

Residues C74, C76, C89, and C92 each coordinate Zn(2+). Mg(2+) is bound by residues D471, D473, and D475.

It belongs to the RNA polymerase beta' chain family. RpoC1 subfamily. In cyanobacteria the RNAP catalytic core is composed of 2 alpha, 1 beta, 1 beta', 1 gamma and 1 omega subunit. When a sigma factor is associated with the core the holoenzyme is formed, which can initiate transcription. It depends on Mg(2+) as a cofactor. Requires Zn(2+) as cofactor.

It carries out the reaction RNA(n) + a ribonucleoside 5'-triphosphate = RNA(n+1) + diphosphate. Its function is as follows. DNA-dependent RNA polymerase catalyzes the transcription of DNA into RNA using the four ribonucleoside triphosphates as substrates. This is DNA-directed RNA polymerase subunit gamma from Prochlorococcus marinus (strain MIT 9515).